The sequence spans 207 residues: Ribonuclease HII (207 aa).

The RNase H type-2 domain maps to 1-207 (MDVLGIDEAG…ATVEKMKNSQ (207 aa)). 3 residues coordinate a divalent metal cation: aspartate 7, glutamate 8, and aspartate 105.

Belongs to the RNase HII family. It depends on Mn(2+) as a cofactor. Requires Mg(2+) as cofactor.

It is found in the cytoplasm. The enzyme catalyses Endonucleolytic cleavage to 5'-phosphomonoester.. Its function is as follows. Endonuclease that specifically degrades the RNA of RNA-DNA hybrids. The protein is Ribonuclease HII of Methanobrevibacter smithii (strain ATCC 35061 / DSM 861 / OCM 144 / PS).